We begin with the raw amino-acid sequence, 113 residues long: Large ribosomal subunit protein eL30 (113 aa).

It belongs to the eukaryotic ribosomal protein eL30 family.

The polypeptide is Large ribosomal subunit protein eL30 (RpL30) (Spodoptera frugiperda (Fall armyworm)).